A 914-amino-acid chain; its full sequence is Serine/threonine kinase SAD-1 (914 aa).

Residues 47–298 form the Protein kinase domain; it reads YKLEKTLGKG…LADVFKHPWV (252 aa). ATP is bound by residues 53–61 and Lys76; that span reads LGKGQTGLV. Asp169 (proton acceptor) is an active-site residue. Disordered regions lie at residues 375–551, 563–590, and 757–914; these read AQED…SPPS, TMNSTNSSTNSLIAGNSQTSIGSTSGPW, and NSTQ…ADKV. A compositionally biased stretch (basic and acidic residues) spans 393-402; sequence PPKKRTDSSR. Residues 444-462 are compositionally biased toward low complexity; the sequence is RSSTRDLFGSSSSGSYSAR. Residues 473–482 are compositionally biased toward polar residues; it reads ASRSTNSYHY. A compositionally biased stretch (basic and acidic residues) spans 495–526; it reads AARHVRDAQERRESRDSGRGSSRKESKDRSDK. 2 stretches are compositionally biased toward low complexity: residues 527-551 and 563-573; these read SASSSSCKNDASSTSSVPHKYSPPS and TMNSTNSSTNS. A compositionally biased stretch (polar residues) spans 574–590; the sequence is LIAGNSQTSIGSTSGPW. Residues 780-796 are compositionally biased toward low complexity; that stretch reads DSSVGSACSDSESNASS. Residues 823–837 are compositionally biased toward polar residues; the sequence is SMRSVGSGTANSYKS. Low complexity predominate over residues 850–876; the sequence is ASSSSASNRYGPSSSSSGSYSNNADYS. Residues 882 to 903 are compositionally biased toward polar residues; that stretch reads SQRSNGSSAPKNQYSPGSQRSF.

The protein belongs to the protein kinase superfamily. CAMK Ser/Thr protein kinase family. SNF1 subfamily. In terms of assembly, interacts with strd-1 and nab-1. The cofactor is Mg(2+). Expressed in neurons. Colocalizes with strd-1 along the dorsal nerve cord.

It is found in the synapse. It carries out the reaction L-seryl-[protein] + ATP = O-phospho-L-seryl-[protein] + ADP + H(+). The catalysed reaction is L-threonyl-[protein] + ATP = O-phospho-L-threonyl-[protein] + ADP + H(+). Functionally, regulates both neuronal polarity and synaptic organization when bound to strd-1. Kinase activity is required for the establishment, but not the maintenance, of both processes. Binding to nab-1 is essential for role in restricting axonal fate during neuronal polarization but is not required for regulating synapse morphology. This chain is Serine/threonine kinase SAD-1, found in Caenorhabditis elegans.